Consider the following 133-residue polypeptide: DNA-directed RNA polymerase subunit omega (133 aa).

It belongs to the RNA polymerase subunit omega family. The RNAP catalytic core consists of 2 alpha, 1 beta, 1 beta' and 1 omega subunit. When a sigma factor is associated with the core the holoenzyme is formed, which can initiate transcription.

It carries out the reaction RNA(n) + a ribonucleoside 5'-triphosphate = RNA(n+1) + diphosphate. Promotes RNA polymerase assembly. Latches the N- and C-terminal regions of the beta' subunit thereby facilitating its interaction with the beta and alpha subunits. The sequence is that of DNA-directed RNA polymerase subunit omega from Brucella canis (strain ATCC 23365 / NCTC 10854 / RM-666).